A 461-amino-acid chain; its full sequence is Photosystem II CP43 reaction center protein (461 aa).

A propeptide spanning residues 1–2 (ME) is cleaved from the precursor. The residue at position 3 (Thr-3) is an N-acetylthreonine. At Thr-3 the chain carries Phosphothreonine. 5 helical membrane-spanning segments follow: residues 57 to 81 (LFEV…PHIA), 122 to 143 (LIGP…KDKN), 166 to 188 (KAMY…RIIT), 243 to 263 (TPWP…LSYS), and 279 to 300 (WFNN…ASQA). Glu-355 serves as a coordination point for [CaMn4O5] cluster. Residues 435-459 (RARAAAAGFEKGIDRVDEPVLSMRP) traverse the membrane as a helical segment.

This sequence belongs to the PsbB/PsbC family. PsbC subfamily. PSII is composed of 1 copy each of membrane proteins PsbA, PsbB, PsbC, PsbD, PsbE, PsbF, PsbH, PsbI, PsbJ, PsbK, PsbL, PsbM, PsbT, PsbX, PsbY, PsbZ, Psb30/Ycf12, at least 3 peripheral proteins of the oxygen-evolving complex and a large number of cofactors. It forms dimeric complexes. The cofactor is Binds multiple chlorophylls and provides some of the ligands for the Ca-4Mn-5O cluster of the oxygen-evolving complex. It may also provide a ligand for a Cl- that is required for oxygen evolution. PSII binds additional chlorophylls, carotenoids and specific lipids..

The protein localises to the plastid. It localises to the chloroplast thylakoid membrane. Functionally, one of the components of the core complex of photosystem II (PSII). It binds chlorophyll and helps catalyze the primary light-induced photochemical processes of PSII. PSII is a light-driven water:plastoquinone oxidoreductase, using light energy to abstract electrons from H(2)O, generating O(2) and a proton gradient subsequently used for ATP formation. The sequence is that of Photosystem II CP43 reaction center protein from Chlamydomonas moewusii (Chlamydomonas eugametos).